The primary structure comprises 456 residues: tRNA-2-methylthio-N(6)-dimethylallyladenosine synthase (456 aa).

An MTTase N-terminal domain is found at 6–125; it reads KRLFIKTYGC…LPELIAQAHR (120 aa). 6 residues coordinate [4Fe-4S] cluster: Cys15, Cys51, Cys88, Cys163, Cys167, and Cys170. The 237-residue stretch at 149-385 folds into the Radical SAM core domain; it reads QVEGYSAFVT…QELLSDQQAA (237 aa). The region spanning 388–450 is the TRAM domain; the sequence is ESMIGRTLPV…RNSLSGSLTG (63 aa).

The protein belongs to the methylthiotransferase family. MiaB subfamily. In terms of assembly, monomer. Requires [4Fe-4S] cluster as cofactor.

The protein resides in the cytoplasm. It carries out the reaction N(6)-dimethylallyladenosine(37) in tRNA + (sulfur carrier)-SH + AH2 + 2 S-adenosyl-L-methionine = 2-methylsulfanyl-N(6)-dimethylallyladenosine(37) in tRNA + (sulfur carrier)-H + 5'-deoxyadenosine + L-methionine + A + S-adenosyl-L-homocysteine + 2 H(+). Functionally, catalyzes the methylthiolation of N6-(dimethylallyl)adenosine (i(6)A), leading to the formation of 2-methylthio-N6-(dimethylallyl)adenosine (ms(2)i(6)A) at position 37 in tRNAs that read codons beginning with uridine. This is tRNA-2-methylthio-N(6)-dimethylallyladenosine synthase from Maricaulis maris (strain MCS10) (Caulobacter maris).